The chain runs to 291 residues: Small ribosomal subunit biogenesis GTPase RsgA (291 aa).

Residues 63 to 221 enclose the CP-type G domain; that stretch reads QNELKRPPVS…VADTPGFSAL (159 aa). Residues 112–115 and 164–172 contribute to the GTP site; these read TKKD and GQSGVGKST. Positions 245, 250, 252, and 258 each coordinate Zn(2+).

It belongs to the TRAFAC class YlqF/YawG GTPase family. RsgA subfamily. Monomer. Associates with 30S ribosomal subunit, binds 16S rRNA. The cofactor is Zn(2+).

The protein resides in the cytoplasm. Its function is as follows. One of several proteins that assist in the late maturation steps of the functional core of the 30S ribosomal subunit. Helps release RbfA from mature subunits. May play a role in the assembly of ribosomal proteins into the subunit. Circularly permuted GTPase that catalyzes slow GTP hydrolysis, GTPase activity is stimulated by the 30S ribosomal subunit. The sequence is that of Small ribosomal subunit biogenesis GTPase RsgA from Staphylococcus carnosus (strain TM300).